We begin with the raw amino-acid sequence, 427 residues long: Peptidase B (427 aa).

Mn(2+) is bound by residues Lys195 and Asp200. The active site involves Lys207. Positions 218, 277, and 279 each coordinate Mn(2+). The active site involves Arg281.

It belongs to the peptidase M17 family. In terms of assembly, homohexamer. Mn(2+) is required as a cofactor.

It is found in the cytoplasm. The enzyme catalyses Release of an N-terminal amino acid, Xaa, from a peptide or arylamide. Xaa is preferably Glu or Asp but may be other amino acids, including Leu, Met, His, Cys and Gln.. In terms of biological role, probably plays an important role in intracellular peptide degradation. This chain is Peptidase B, found in Salmonella agona (strain SL483).